A 510-amino-acid chain; its full sequence is NAD(P)H-quinone oxidoreductase subunit 2 A, chloroplastic (510 aa).

13 helical membrane-spanning segments follow: residues 24 to 44 (LLLF…GLIL), 57 to 77 (IPWL…ALLF), 99 to 119 (IFQF…VEYI), 124 to 144 (MAIT…MFLC), 149 to 169 (LITI…LSGY), 183 to 203 (YLLM…WLYG), 227 to 247 (PGIS…LSPA), 295 to 315 (WHLL…LIAI), 323 to 343 (MLAY…IVGD), 354 to 374 (YMLF…LFGL), 395 to 415 (ALSL…AGFF), 418 to 438 (LYLF…IGLL), and 484 to 504 (MIVC…IIAI).

Belongs to the complex I subunit 2 family. NDH is composed of at least 16 different subunits, 5 of which are encoded in the nucleus.

The protein resides in the plastid. It is found in the chloroplast thylakoid membrane. It catalyses the reaction a plastoquinone + NADH + (n+1) H(+)(in) = a plastoquinol + NAD(+) + n H(+)(out). It carries out the reaction a plastoquinone + NADPH + (n+1) H(+)(in) = a plastoquinol + NADP(+) + n H(+)(out). Functionally, NDH shuttles electrons from NAD(P)H:plastoquinone, via FMN and iron-sulfur (Fe-S) centers, to quinones in the photosynthetic chain and possibly in a chloroplast respiratory chain. The immediate electron acceptor for the enzyme in this species is believed to be plastoquinone. Couples the redox reaction to proton translocation, and thus conserves the redox energy in a proton gradient. This Solanum lycopersicum (Tomato) protein is NAD(P)H-quinone oxidoreductase subunit 2 A, chloroplastic.